The sequence spans 34 residues: Mytilin-B (34 aa).

Cystine bridges form between C2/C27, C6/C29, C10/C31, and C15/C34.

It is found in the secreted. Functionally, has antibacterial and antiviral activity. In Mytilus edulis (Blue mussel), this protein is Mytilin-B.